The chain runs to 345 residues: NADPH dehydrogenase (345 aa).

Residue 23-26 participates in FMN binding; the sequence is SPMC. Tyr28 is a substrate binding site. The FMN site is built by Ala60 and Gln102. 164–167 provides a ligand contact to substrate; that stretch reads HGAH. FMN contacts are provided by residues Arg215 and 307 to 308; that span reads GR.

The protein belongs to the NADH:flavin oxidoreductase/NADH oxidase family. NamA subfamily. As to quaternary structure, homotetramer. FMN is required as a cofactor.

It catalyses the reaction A + NADPH + H(+) = AH2 + NADP(+). Catalyzes the reduction of the double bond of an array of alpha,beta-unsaturated aldehydes and ketones. It also reduces the nitro group of nitroester and nitroaromatic compounds. It could have a role in detoxification processes. In Bacillus mycoides (strain KBAB4) (Bacillus weihenstephanensis), this protein is NADPH dehydrogenase.